A 288-amino-acid polypeptide reads, in one-letter code: Large ribosomal subunit protein uL2 (288 aa).

Disordered regions lie at residues 1-46 (MAIH…RNVY) and 226-288 (MVMN…RGKK). Residues 235-248 (NGGGQGKSKGGGGR) show a composition bias toward gly residues. Basic residues predominate over residues 279 to 288 (HNGRKPRGKK).

The protein belongs to the universal ribosomal protein uL2 family. Part of the 50S ribosomal subunit. Forms a bridge to the 30S subunit in the 70S ribosome.

Functionally, one of the primary rRNA binding proteins. Required for association of the 30S and 50S subunits to form the 70S ribosome, for tRNA binding and peptide bond formation. It has been suggested to have peptidyltransferase activity; this is somewhat controversial. Makes several contacts with the 16S rRNA in the 70S ribosome. This Opitutus terrae (strain DSM 11246 / JCM 15787 / PB90-1) protein is Large ribosomal subunit protein uL2.